The sequence spans 342 residues: CD2 antigen cytoplasmic tail-binding protein 2 (342 aa).

The segment at 1-64 is disordered; sequence MPKRKVTFQG…DEEGSSKYDI (64 aa). Residue K26 forms a Glycyl lysine isopeptide (Lys-Gly) (interchain with G-Cter in SUMO2) linkage. Position 44 is an N6-acetyllysine (K44). A phosphoserine mark is found at S46, S49, and S117. Disordered stretches follow at residues 130-150 and 177-200; these read RPPD…GQTP and LGAR…PQRL. A Phosphoserine modification is found at S196. The region spanning 281 to 339 is the GYF domain; it reads DVMWEYKWENTGDAELYGPFTSAQMQTWVSEGYFPDGVYCRKLDPPGGQFYNSKRIDFE.

Component of the U5 snRNP complex composed of the U5 snRNA and at least PRPF6, PRPF8, SNRNP200, EFTUD2, SNRNP40, DDX23, TXNL4A and CD2BP2. Interacts directly with TXNL4A and PRPF6. Interacts (via GYF domain) with CD2 (via Pro-rich sequence in the cytoplasmic domain). Interacts with PQBP1.

Its subcellular location is the cytoplasm. The protein localises to the nucleus. Its function is as follows. Involved in pre-mRNA splicing as component of the U5 snRNP complex that is involved in spliceosome assembly. In Mus musculus (Mouse), this protein is CD2 antigen cytoplasmic tail-binding protein 2 (Cd2bp2).